The primary structure comprises 594 residues: ATP-dependent lipid A-core flippase (594 aa).

A run of 6 helical transmembrane segments spans residues 35-55, 64-84, 135-155, 161-181, 262-282, and 289-309; these read FVLA…IPKV, FGGS…GVAL, AVIF…ITLV, VVAL…VVAV, VTAF…MIQA, and IGGF…LKHL. Positions 36 to 318 constitute an ABC transmembrane type-1 domain; sequence VLAIIAMGLV…LADLNQPLQR (283 aa). One can recognise an ABC transporter domain in the interval 350 to 588; that stretch reads LVFDNVGFRY…NGLYAGLHRI (239 aa). Position 384–391 (384–391) interacts with ATP; that stretch reads GPSGSGKT.

This sequence belongs to the ABC transporter superfamily. Lipid exporter (TC 3.A.1.106) family. In terms of assembly, homodimer.

It localises to the cell inner membrane. It carries out the reaction ATP + H2O + lipid A-core oligosaccharideSide 1 = ADP + phosphate + lipid A-core oligosaccharideSide 2.. Functionally, involved in lipopolysaccharide (LPS) biosynthesis. Translocates lipid A-core from the inner to the outer leaflet of the inner membrane. Transmembrane domains (TMD) form a pore in the inner membrane and the ATP-binding domain (NBD) is responsible for energy generation. The sequence is that of ATP-dependent lipid A-core flippase from Cupriavidus metallidurans (strain ATCC 43123 / DSM 2839 / NBRC 102507 / CH34) (Ralstonia metallidurans).